The primary structure comprises 218 residues: Pyridoxine/pyridoxamine 5'-phosphate oxidase (218 aa).

Substrate contacts are provided by residues Arg14 to Tyr17 and Lys72. Residues Arg67–Lys72, Tyr82–Thr83, Arg88, Lys89, and Gln111 contribute to the FMN site. Substrate is bound by residues Tyr129, Arg133, and Ser137. FMN contacts are provided by residues Gln146–Ser147 and Trp191. Arg197–His199 lines the substrate pocket. Position 201 (Arg201) interacts with FMN.

It belongs to the pyridoxamine 5'-phosphate oxidase family. Homodimer. FMN serves as cofactor.

The catalysed reaction is pyridoxamine 5'-phosphate + O2 + H2O = pyridoxal 5'-phosphate + H2O2 + NH4(+). It catalyses the reaction pyridoxine 5'-phosphate + O2 = pyridoxal 5'-phosphate + H2O2. It functions in the pathway cofactor metabolism; pyridoxal 5'-phosphate salvage; pyridoxal 5'-phosphate from pyridoxamine 5'-phosphate: step 1/1. Its pathway is cofactor metabolism; pyridoxal 5'-phosphate salvage; pyridoxal 5'-phosphate from pyridoxine 5'-phosphate: step 1/1. In terms of biological role, catalyzes the oxidation of either pyridoxine 5'-phosphate (PNP) or pyridoxamine 5'-phosphate (PMP) into pyridoxal 5'-phosphate (PLP). In Escherichia coli O139:H28 (strain E24377A / ETEC), this protein is Pyridoxine/pyridoxamine 5'-phosphate oxidase.